The chain runs to 241 residues: Putative ABC transporter ATP-binding protein CA_C0773 (241 aa).

Residues 2-241 (IKLEKVSFTY…REFLMECNII (240 aa)) enclose the ABC transporter domain. 34 to 41 (GPNGSGKS) lines the ATP pocket.

The protein belongs to the ABC transporter superfamily.

It is found in the cell membrane. Functionally, probably part of an ABC transporter complex. Responsible for energy coupling to the transport system. In Clostridium acetobutylicum (strain ATCC 824 / DSM 792 / JCM 1419 / IAM 19013 / LMG 5710 / NBRC 13948 / NRRL B-527 / VKM B-1787 / 2291 / W), this protein is Putative ABC transporter ATP-binding protein CA_C0773.